We begin with the raw amino-acid sequence, 263 residues long: Elongation factor Ts (263 aa).

Positions 82 to 85 (TDFV) are involved in Mg(2+) ion dislocation from EF-Tu. Low complexity predominate over residues 221 to 251 (APPAVVEAPVAETPEPAVAETPEAKPAATES). Residues 221 to 263 (APPAVVEAPVAETPEPAVAETPEAKPAATESKPAKSKSAKKKK) are disordered. Residues 254–263 (AKSKSAKKKK) are compositionally biased toward basic residues.

The protein belongs to the EF-Ts family.

The protein localises to the cytoplasm. Its function is as follows. Associates with the EF-Tu.GDP complex and induces the exchange of GDP to GTP. It remains bound to the aminoacyl-tRNA.EF-Tu.GTP complex up to the GTP hydrolysis stage on the ribosome. In Cyanothece sp. (strain PCC 7425 / ATCC 29141), this protein is Elongation factor Ts.